The following is a 155-amino-acid chain: uncharacterized protein (155 aa).

An N-terminal signal peptide occupies residues 1 to 24; sequence MQQLSKRRLSALFVTAFLPVTAFA.

This is an uncharacterized protein from Chromohalobacter salexigens (strain ATCC BAA-138 / DSM 3043 / CIP 106854 / NCIMB 13768 / 1H11).